We begin with the raw amino-acid sequence, 89 residues long: Acylphosphatase (89 aa).

The 87-residue stretch at 3–89 folds into the Acylphosphatase-like domain; that stretch reads RKEFLVSGRV…DTREKRFSTY (87 aa). Catalysis depends on residues R18 and N36.

The protein belongs to the acylphosphatase family.

The enzyme catalyses an acyl phosphate + H2O = a carboxylate + phosphate + H(+). This Clostridium perfringens (strain ATCC 13124 / DSM 756 / JCM 1290 / NCIMB 6125 / NCTC 8237 / Type A) protein is Acylphosphatase (acyP).